A 394-amino-acid chain; its full sequence is Guanine nucleotide-binding protein G(s) subunit alpha (394 aa).

The tract at residues 1–25 (MGCLGDSKTEDQRNEEKAQREANKK) is disordered. A lipid anchor (N-palmitoyl glycine) is attached at G2. A lipid anchor (S-palmitoyl cysteine) is attached at C3. The span at 7–25 (SKTEDQRNEEKAQREANKK) shows a compositional bias: basic and acidic residues. The G-alpha domain occupies 39-394 (ATHRLLLLGA…RMHLRQYELL (356 aa)). Residues 42–55 (RLLLLGAGESGKST) form a G1 motif region. 47 to 55 (GAGESGKST) is a GTP binding site. S54 contacts Mg(2+). Positions 68–90 (FNGEGGEEDPQAARSNSDGEKAT) are disordered. Residues 196-204 (DLLRCRVLT) form a G2 motif region. GTP is bound by residues 197–204 (LLRCRVLT), 223–227 (DVGGQ), 292–295 (NKQD), and A366. Mg(2+) is bound at residue T204. The segment at 219-228 (FHMFDVGGQR) is G3 motif. Residues 288 to 295 (ILFLNKQD) form a G4 motif region. A G5 motif region spans residues 364 to 369 (TCAVDT).

Belongs to the G-alpha family. G(s) subfamily. As to quaternary structure, heterotrimeric G proteins are composed of 3 units; alpha, beta and gamma. The alpha chain contains the guanine nucleotide binding site. Interacts with CRY1; the interaction may block GPCR-mediated regulation of cAMP concentrations. Interacts with ADCY6 and stimulates its adenylyl cyclase activity. Interacts with ADCY2 and ADCY5. Stimulates the ADCY5 adenylyl cyclase activity. Interaction with SASH1.

The protein localises to the cell membrane. Its function is as follows. Guanine nucleotide-binding proteins (G proteins) function as transducers in numerous signaling pathways controlled by G protein-coupled receptors (GPCRs). Signaling involves the activation of adenylyl cyclases, resulting in increased levels of the signaling molecule cAMP. GNAS functions downstream of several GPCRs, including beta-adrenergic receptors. Stimulates the Ras signaling pathway via RAPGEF2. The protein is Guanine nucleotide-binding protein G(s) subunit alpha (GNAS) of Cricetulus longicaudatus (Long-tailed dwarf hamster).